The chain runs to 519 residues: 2,3-bisphosphoglycerate-independent phosphoglycerate mutase (519 aa).

Mn(2+) is bound by residues aspartate 9 and serine 60. The active-site Phosphoserine intermediate is the serine 60. Positions aspartate 76–alanine 91 are enriched in basic and acidic residues. Residues aspartate 76–phenylalanine 102 are disordered. Residues histidine 134, arginine 163–aspartate 164, arginine 195, arginine 201, arginine 267–arginine 270, and lysine 341 contribute to the substrate site. Residues aspartate 408, histidine 412, aspartate 449, histidine 450, and histidine 466 each coordinate Mn(2+).

The protein belongs to the BPG-independent phosphoglycerate mutase family. Mn(2+) serves as cofactor.

It carries out the reaction (2R)-2-phosphoglycerate = (2R)-3-phosphoglycerate. It participates in carbohydrate degradation; glycolysis; pyruvate from D-glyceraldehyde 3-phosphate: step 3/5. Functionally, catalyzes the interconversion of 2-phosphoglycerate and 3-phosphoglycerate. In Haloarcula marismortui (strain ATCC 43049 / DSM 3752 / JCM 8966 / VKM B-1809) (Halobacterium marismortui), this protein is 2,3-bisphosphoglycerate-independent phosphoglycerate mutase.